The sequence spans 214 residues: Cell division protein SepF (214 aa).

The disordered stretch occupies residues 23–70; the sequence is YYDDRAPSRGFPRPRFDDGYGRYDGDDYDDPRREPADYPPPAGYRGGY. Basic and acidic residues predominate over residues 36-58; it reads PRFDDGYGRYDGDDYDDPRREPA.

The protein belongs to the SepF family. As to quaternary structure, homodimer. Interacts with FtsZ.

It localises to the cytoplasm. Its function is as follows. Cell division protein that is part of the divisome complex and is recruited early to the Z-ring. Probably stimulates Z-ring formation, perhaps through the cross-linking of FtsZ protofilaments. Its function overlaps with FtsA. In Mycobacterium avium (strain 104), this protein is Cell division protein SepF.